The sequence spans 247 residues: ATP synthase subunit a, chloroplastic (247 aa).

The next 5 helical transmembrane spans lie at 38-58 (QVLI…AIAV), 95-115 (VPFI…GALL), 134-154 (INTT…AGLT), 199-219 (LVVV…VMFL), and 220-240 (GLFT…AYIG).

It belongs to the ATPase A chain family. F-type ATPases have 2 components, CF(1) - the catalytic core - and CF(0) - the membrane proton channel. CF(1) has five subunits: alpha(3), beta(3), gamma(1), delta(1), epsilon(1). CF(0) has four main subunits: a, b, b' and c.

The protein resides in the plastid. The protein localises to the chloroplast thylakoid membrane. Functionally, key component of the proton channel; it plays a direct role in the translocation of protons across the membrane. This Illicium oligandrum (Star anise) protein is ATP synthase subunit a, chloroplastic.